Reading from the N-terminus, the 236-residue chain is 2-C-methyl-D-erythritol 4-phosphate cytidylyltransferase (236 aa).

It belongs to the IspD/TarI cytidylyltransferase family. IspD subfamily.

It carries out the reaction 2-C-methyl-D-erythritol 4-phosphate + CTP + H(+) = 4-CDP-2-C-methyl-D-erythritol + diphosphate. It participates in isoprenoid biosynthesis; isopentenyl diphosphate biosynthesis via DXP pathway; isopentenyl diphosphate from 1-deoxy-D-xylulose 5-phosphate: step 2/6. Catalyzes the formation of 4-diphosphocytidyl-2-C-methyl-D-erythritol from CTP and 2-C-methyl-D-erythritol 4-phosphate (MEP). The polypeptide is 2-C-methyl-D-erythritol 4-phosphate cytidylyltransferase (Alkaliphilus oremlandii (strain OhILAs) (Clostridium oremlandii (strain OhILAs))).